A 660-amino-acid polypeptide reads, in one-letter code: DNA ligase (660 aa).

NAD(+)-binding positions include 33–37 (DFVYD), 82–83 (SL), and glutamate 110. Catalysis depends on lysine 112, which acts as the N6-AMP-lysine intermediate. The NAD(+) site is built by arginine 133, glutamate 167, lysine 281, and lysine 305. Zn(2+) is bound by residues cysteine 396, cysteine 399, cysteine 412, and cysteine 417. The BRCT domain maps to 583 to 660 (GENKLLAGKK…SFEDIKSYLD (78 aa)).

The protein belongs to the NAD-dependent DNA ligase family. LigA subfamily. Mg(2+) is required as a cofactor. The cofactor is Mn(2+).

It catalyses the reaction NAD(+) + (deoxyribonucleotide)n-3'-hydroxyl + 5'-phospho-(deoxyribonucleotide)m = (deoxyribonucleotide)n+m + AMP + beta-nicotinamide D-nucleotide.. Functionally, DNA ligase that catalyzes the formation of phosphodiester linkages between 5'-phosphoryl and 3'-hydroxyl groups in double-stranded DNA using NAD as a coenzyme and as the energy source for the reaction. It is essential for DNA replication and repair of damaged DNA. This Borreliella burgdorferi (strain ZS7) (Borrelia burgdorferi) protein is DNA ligase.